A 138-amino-acid polypeptide reads, in one-letter code: Large ribosomal subunit protein uL16 (138 aa).

Over residues 1–16 (MLIPRRVKHRKQHHPS) the composition is skewed to basic residues. The interval 1–25 (MLIPRRVKHRKQHHPSRSGAAKGGT) is disordered.

The protein belongs to the universal ribosomal protein uL16 family. As to quaternary structure, part of the 50S ribosomal subunit.

Its function is as follows. Binds 23S rRNA and is also seen to make contacts with the A and possibly P site tRNAs. This chain is Large ribosomal subunit protein uL16, found in Rhodococcus jostii (strain RHA1).